We begin with the raw amino-acid sequence, 257 residues long: Discoidin-2 (257 aa).

Residues 1–155 form a beta-sandwich region; it reads MSVPAGSVSC…SLRWELYALP (155 aa). The region spanning 10–154 is the F5/8 type C domain; it reads CLANALLNLR…ISLRWELYAL (145 aa). Ca(2+) is bound by residues Asn-39, Ser-40, and Asp-47. The Cell attachment site motif lies at 81–83; it reads RGD. At His-84 the chain carries Phosphohistidine. Residues 156 to 162 are linker; it reads VKSYSNP. Residues 163-257 form a lectin-like region; it reads SVQVGEVSIG…FDYVAVEFNN (95 aa). A carbohydrate is bound by residues Asp-209, Arg-218, and Trp-238.

In terms of assembly, homotrimer. The N-terminus is blocked. Maturing spore cells.

In terms of biological role, galactose-binding lectin. May be necessary for the primary process of spore formation and may be involved in spore coat formation. The sequence is that of Discoidin-2 (dscE) from Dictyostelium discoideum (Social amoeba).